The primary structure comprises 248 residues: Exosome complex component Rrp41 (248 aa).

The protein belongs to the RNase PH family. Rrp41 subfamily. As to quaternary structure, component of the archaeal exosome complex. Forms a hexameric ring-like arrangement composed of 3 Rrp41-Rrp42 heterodimers. The hexameric ring associates with a trimer of Rrp4 and/or Csl4 subunits.

The protein resides in the cytoplasm. Its function is as follows. Catalytic component of the exosome, which is a complex involved in RNA degradation. Has 3'-&gt;5' exoribonuclease activity. Can also synthesize heteromeric RNA-tails. In Thermoplasma volcanium (strain ATCC 51530 / DSM 4299 / JCM 9571 / NBRC 15438 / GSS1), this protein is Exosome complex component Rrp41.